A 259-amino-acid chain; its full sequence is Apolipoprotein A-I (259 aa).

Residues 1-18 (MKAAVLAVALVFLTGCQA) form the signal peptide. 2 tandem repeats follow at residues 67-88 (LNLLDNWDTLGSTVGRLQEQLG) and 89-110 (PVTQEFWANLEKETDWLRNEMN). The segment at 67–259 (LNLLDNWDTL…IDEAKKKLNA (193 aa)) is 10 X approximate tandem repeats. Methionine 109 is modified (methionine sulfoxide). A 3; half-length repeat occupies 111–121 (KDLENVKQKMQ). The stretch at 122–143 (PHLDEFQEKWNEEVEAYRQKLE) is repeat 4. A 5; truncated repeat occupies 144–161 (PLGTELHKNAKEMQRHLK). Repeat unit 6 spans residues 162–183 (VVAEEFRDRMRVNADALRAKFG). The 7; truncated repeat unit spans residues 184–203 (LYSDQMRENLAQRLTEIKNH). The residue at position 189 (methionine 189) is a Methionine sulfoxide. The stretch at 204–225 (PTLIEYHTKASDHLKTLGEKAK) is repeat 8. A 9; half-length repeat occupies 226 to 236 (PALDDLGQGLM). Methionine sulfoxide is present on methionine 236. Repeat 10 spans residues 237-259 (PVLEAWKAKIMSMIDEAKKKLNA).

It belongs to the apolipoprotein A1/A4/E family. In terms of assembly, homodimer. Interacts with APOA1BP and CLU. Component of a sperm activating protein complex (SPAP), consisting of APOA1, an immunoglobulin heavy chain, an immunoglobulin light chain and albumin. Interacts with NDRG1. Interacts with SCGB3A2. Interacts with NAXE and YJEFN3. Post-translationally, glycosylated. In terms of processing, palmitoylated. Phosphorylation sites are present in the extracellular medium. In terms of tissue distribution, major protein of plasma HDL, also found in chylomicrons.

The protein localises to the secreted. Participates in the reverse transport of cholesterol from tissues to the liver for excretion by promoting cholesterol efflux from tissues and by acting as a cofactor for the lecithin cholesterol acyltransferase (LCAT). As part of the SPAP complex, activates spermatozoa motility. In Rattus norvegicus (Rat), this protein is Apolipoprotein A-I (Apoa1).